Here is a 366-residue protein sequence, read N- to C-terminus: ATP-dependent 6-phosphofructokinase (366 aa).

Residues Gly16, 78–79 (RE), and 118–121 (GNGT) contribute to the ATP site. The segment at 74–94 (LGTSREKPFKPDPGEKDSEAG) is disordered. Over residues 77–94 (SREKPFKPDPGEKDSEAG) the composition is skewed to basic and acidic residues. Asn119 lines the Mg(2+) pocket. Residues 141–143 (TID), Arg178, 185–187 (MGH), Glu238, Arg282, and 288–291 (YLQR) each bind substrate. Residue Asp143 is the Proton acceptor of the active site.

This sequence belongs to the phosphofructokinase type A (PFKA) family. Mixed-substrate PFK group III subfamily. As to quaternary structure, homodimer or homotetramer. The cofactor is Mg(2+).

It localises to the cytoplasm. The catalysed reaction is beta-D-fructose 6-phosphate + ATP = beta-D-fructose 1,6-bisphosphate + ADP + H(+). It functions in the pathway carbohydrate degradation; glycolysis; D-glyceraldehyde 3-phosphate and glycerone phosphate from D-glucose: step 3/4. In terms of biological role, catalyzes the phosphorylation of D-fructose 6-phosphate to fructose 1,6-bisphosphate by ATP, the first committing step of glycolysis. The chain is ATP-dependent 6-phosphofructokinase from Spirochaeta thermophila (strain ATCC 49972 / DSM 6192 / RI 19.B1).